A 476-amino-acid chain; its full sequence is Transposase for transposon Tn5 (476 aa).

Positions 1-70 (MITSALHRAA…YRFIRNPNVS (70 aa)) are interaction with DNA. Mg(2+) is bound by residues aspartate 97 and aspartate 188. 2 interaction with DNA regions span residues 237–255 (YQIS…KRKN) and 319–348 (YTHR…EPDN). Mg(2+) is bound at residue glutamate 326. The segment at 369–476 (SFTLPQALRA…KDLMAQGIKI (108 aa)) is important for dimerization.

Belongs to the transposase 11 family. Monomer. Homodimer of tnp (isoform 1), and heterodimer of tnp (isoform 1) and inh (isoform 2). Requires Mg(2+) as cofactor.

Its function is as follows. Mediates transposition of transposon Tn5 by a 'cut and paste' mechanism. First, the monomeric transposase binds the 19 bp inverted DNA repeats flanking the transposon. Then, dimerization of the DNA-bound transposase creates a synaptic DNA complex. After nicking of the first DNA strand, excision of the transposon proceeds through a series of intermediates. The transposase then mediates the insertion of the transposon at a new site by strand transfer. The activity of the wild-type transposase is very low, and is further inhibited by dimerization with the transposase inhibitor (inh). This chain is Transposase for transposon Tn5 (tnpA), found in Escherichia coli.